The sequence spans 1793 residues: Transposon Ty1-H Gag-Pol polyprotein (1793 aa).

Composition is skewed to polar residues over residues 1–10, 48–60, and 127–152; these read MESQQLSNYP, TKAN…TPAS, and QSQF…GNTF. Disordered stretches follow at residues 1–84, 126–174, and 390–459; these read MESQ…QNGP, PQSQ…PPPM, and GSRN…SKST. A compositionally biased stretch (low complexity) spans 153 to 165; that stretch reads TDSSSADSDMTST. The interval 337–439 is RNA-binding; that stretch reads NNGIHINNKV…NSKSKTARAH (103 aa). Low complexity predominate over residues 440-456; that stretch reads NVSTSNNSPSTDNDSIS. The active-site For protease activity; shared with dimeric partner is Asp499. Residues 621–678 form an integrase-type zinc finger-like region; sequence NVHTSESTRKYPYPFIHRMLAHANAQTIRYSLKNNTITYFNESDVDWSSAIDYQCPDC. Positions 698-873 constitute an Integrase catalytic domain; it reads NSYEPFQYLH…AGLDISTLLP (176 aa). Mg(2+) is bound by residues Asp709 and Asp774. The disordered stretch occupies residues 996 to 1208; it reads AVSPTDSTPP…SSLGGIGDSN (213 aa). Residues 998–1007 show a composition bias toward low complexity; sequence SPTDSTPPST. A compositionally biased stretch (polar residues) spans 1043 to 1053; the sequence is STPQISDIEST. A compositionally biased stretch (basic and acidic residues) spans 1076 to 1091; it reads ESSHASKSKDFRHSDS. Polar residues-rich tracts occupy residues 1092–1120 and 1133–1144; these read YSDN…QTSE and SIDTSSSESNSL. A Bipartite nuclear localization signal motif is present at residues 1216–1250; it reads KKRSLEDNETEIKVSRDTWNTKNMRSLEPPRSKKR. Positions 1376–1514 constitute a Reverse transcriptase Ty1/copia-type domain; sequence NNYYITQLDI…DILGLEIKYQ (139 aa). Asp1384, Asp1465, Asp1466, Asp1648, Glu1690, and Asp1723 together coordinate Mg(2+). The RNase H Ty1/copia-type domain maps to 1648 to 1790; sequence DASYGNQPYY…IKTFKLLTNK (143 aa).

The capsid protein forms a homotrimer, from which the VLPs are assembled. The protease is a homodimer, whose active site consists of two apposed aspartic acid residues. Initially, virus-like particles (VLPs) are composed of the structural unprocessed proteins Gag and Gag-Pol, and also contain the host initiator methionine tRNA (tRNA(i)-Met) which serves as a primer for minus-strand DNA synthesis, and a dimer of genomic Ty RNA. Processing of the polyproteins occurs within the particle and proceeds by an ordered pathway, called maturation. First, the protease (PR) is released by autocatalytic cleavage of the Gag-Pol polyprotein yielding capsid protein p45 and a Pol-p154 precursor protein. This cleavage is a prerequisite for subsequent processing of Pol-p154 at the remaining sites to release the mature structural and catalytic proteins. Maturation takes place prior to the RT reaction and is required to produce transposition-competent VLPs.

The protein localises to the cytoplasm. It is found in the nucleus. The catalysed reaction is DNA(n) + a 2'-deoxyribonucleoside 5'-triphosphate = DNA(n+1) + diphosphate. It carries out the reaction Endonucleolytic cleavage to 5'-phosphomonoester.. Capsid protein (CA) is the structural component of the virus-like particle (VLP), forming the shell that encapsulates the retrotransposons dimeric RNA genome. The particles are assembled from trimer-clustered units and there are holes in the capsid shells that allow for the diffusion of macromolecules. CA also has nucleocapsid-like chaperone activity, promoting primer tRNA(i)-Met annealing to the multipartite primer-binding site (PBS), dimerization of Ty1 RNA and initiation of reverse transcription. Its function is as follows. The aspartyl protease (PR) mediates the proteolytic cleavages of the Gag and Gag-Pol polyproteins after assembly of the VLP. In terms of biological role, reverse transcriptase/ribonuclease H (RT) is a multifunctional enzyme that catalyzes the conversion of the retro-elements RNA genome into dsDNA within the VLP. The enzyme displays a DNA polymerase activity that can copy either DNA or RNA templates, and a ribonuclease H (RNase H) activity that cleaves the RNA strand of RNA-DNA heteroduplexes during plus-strand synthesis and hydrolyzes RNA primers. The conversion leads to a linear dsDNA copy of the retrotransposon that includes long terminal repeats (LTRs) at both ends. Functionally, integrase (IN) targets the VLP to the nucleus, where a subparticle preintegration complex (PIC) containing at least integrase and the newly synthesized dsDNA copy of the retrotransposon must transit the nuclear membrane. Once in the nucleus, integrase performs the integration of the dsDNA into the host genome. The chain is Transposon Ty1-H Gag-Pol polyprotein (TY1B-H) from Saccharomyces cerevisiae (strain ATCC 204508 / S288c) (Baker's yeast).